The following is an 870-amino-acid chain: Disks large homolog 2 (870 aa).

Residues cysteine 5 and cysteine 7 are each lipidated (S-palmitoyl cysteine). Serine 28 carries the post-translational modification Phosphoserine. Tyrosine 58 carries the post-translational modification Phosphotyrosine. Serine 65 is subject to Phosphoserine. 2 PDZ domains span residues 98–184 (EITL…VRRR) and 193–279 (EIKL…VGKP). Phosphoserine is present on residues serine 307, serine 328, serine 360, serine 365, serine 406, and serine 414. A PDZ 3 domain is found at 421-501 (KVVLHKGSTG…QTVTIIAQYQ (81 aa)). Position 505 is a phosphotyrosine (tyrosine 505). Phosphoserine occurs at positions 528, 530, 553, 627, and 635. One can recognise an SH3 domain in the interval 536-606 (KRSLYVRAMF…PSKRRVERKE (71 aa)). The region spanning 680-855 (TRPVIILGPM…IYNQCKLVIE (176 aa)) is the Guanylate kinase-like domain. Phosphotyrosine is present on residues tyrosine 750 and tyrosine 755.

This sequence belongs to the MAGUK family. Interacts through its PDZ domains with NETO1. Interacts with NOS1/nNOS through second PDZ domain. Interacts with KCNJ2/Kir2.1 (via C-terminus) through one of its PDZ domains. Interacts with KCNJ4, Interacts with FRMPD4 (via C-terminus). Interacts with LRFN1, LRFN2 and LRFN4. Interacts with FASLG. Interacts with KCNJ4. Interacts with ADAM22. Interacts with DGKI (via PDZ-binding motif). Palmitoylation of isoform 1 is not required for targeting to postsynaptic density.

The protein resides in the cell membrane. It is found in the postsynaptic density. It localises to the synapse. Its subcellular location is the membrane. The protein localises to the cell projection. The protein resides in the axon. It is found in the perikaryon. Required for perception of chronic pain through NMDA receptor signaling. Regulates surface expression of NMDA receptors in dorsal horn neurons of the spinal cord. Interacts with the cytoplasmic tail of NMDA receptor subunits as well as inward rectifying potassium channels. Involved in regulation of synaptic stability at cholinergic synapses. Part of the postsynaptic protein scaffold of excitatory synapses. The polypeptide is Disks large homolog 2 (DLG2) (Homo sapiens (Human)).